The primary structure comprises 534 residues: Dolichol kinase (534 aa).

Topologically, residues 1-16 (MTRQCPPQESGAALSG) are cytoplasmic. Residues 17-37 (SVLAEAAVVFAVVLSIHAAVW) traverse the membrane as a helical segment. Residues 38 to 72 (DRYSWCAVALAVQAFYVQYKWDRLLQQGNAVFQFR) lie on the Extracellular side of the membrane. A helical membrane pass occupies residues 73 to 93 (MSANSGLLPASMVMPLLGLVM). Over 94 to 109 (KERCQTAGNPYFERFG) the chain is Cytoplasmic. A helical membrane pass occupies residues 110 to 130 (IVVAATGMAVALFSSVLALGI). Topologically, residues 131–132 (TR) are extracellular. The chain crosses the membrane as a helical span at residues 133-153 (PVPTNTCAISGLAGGVIIYIM). Topologically, residues 154-161 (RHSLSVGE) are cytoplasmic. A helical transmembrane segment spans residues 162-182 (VIEVLEVLLIFVYLNMILLYL). Residues 183-186 (LPRC) are Extracellular-facing. Residues 187–207 (FTPGEALLVLGGISFVLNQLI) traverse the membrane as a helical segment. Residues 208 to 220 (KRSLTESQGDPVD) are Cytoplasmic-facing. Residues 221-241 (FFLLVVVVGMVLMGVFFSTLF) form a helical membrane-spanning segment. Residues 242–252 (VFMDSGTWASS) are Extracellular-facing. A helical membrane pass occupies residues 253–273 (IFFHLMTCVLGLGVVLPWLHW). Over 274 to 293 (LIRRNPLLWLLQFLFYTETR) the chain is Cytoplasmic. The helical transmembrane segment at 294–314 (IYLLAYWSLLASVACLVVLYQ) threads the bilayer. Over 315–333 (NAKRSSSESKKHRAPTITR) the chain is Extracellular. Residues 334–350 (KYFHFIVVATYIPGIIF) traverse the membrane as a helical segment. The Cytoplasmic portion of the chain corresponds to 351–355 (DRPLL). Residues 356-376 (YVAATVCLAVFIFLEYVRYFR) traverse the membrane as a helical segment. Residues 377–397 (IKPLGHTLRSLLSLFLDERDS) are Extracellular-facing. A helical membrane pass occupies residues 398 to 418 (GPLILTHIYLLLGMSLPIWLI). Residues 419–432 (PRPCTQKDSLEGAR) are Cytoplasmic-facing. The chain crosses the membrane as a helical span at residues 433-453 (ALVPYAGVLAVGVGDTVASIF). Topologically, residues 454 to 468 (GSTMGEIRWPGTKKT) are extracellular. The CTP-binding stretch occupies residues 455 to 470 (STMGEIRWPGTKKTFE). The chain crosses the membrane as a helical span at residues 469–489 (FEGTMTSIFAQIISVALILIF). Over 490 to 491 (DS) the chain is Cytoplasmic. A helical membrane pass occupies residues 492–512 (GVDLNYSYAWILGSISTVSLL). Over 513-534 (EAYTTQIDNLLLPLYLLILLMA) the chain is Extracellular.

The protein belongs to the polyprenol kinase family.

The protein resides in the endoplasmic reticulum membrane. It carries out the reaction a di-trans,poly-cis-dolichol + CTP = a di-trans,poly-cis-dolichyl phosphate + CDP + H(+). Its pathway is protein modification; protein glycosylation. Functionally, catalyzes CTP-mediated phosphorylation of dolichol, the terminal step in de novo dolichyl monophosphate (Dol-P) biosynthesis. Dol-P is a lipid carrier essential for the synthesis of N-linked and O-linked oligosaccharides and for GPI anchors. The protein is Dolichol kinase of Mus musculus (Mouse).